Reading from the N-terminus, the 387-residue chain is 8-amino-7-oxononanoate synthase (387 aa).

Residue arginine 19 participates in substrate binding. 106 to 107 (GY) is a pyridoxal 5'-phosphate binding site. Histidine 131 contributes to the substrate binding site. Residues serine 177, histidine 205, and threonine 234 each contribute to the pyridoxal 5'-phosphate site. N6-(pyridoxal phosphate)lysine is present on lysine 237. A substrate-binding site is contributed by threonine 351.

It belongs to the class-II pyridoxal-phosphate-dependent aminotransferase family. BioF subfamily. Homodimer. Requires pyridoxal 5'-phosphate as cofactor.

The catalysed reaction is 6-carboxyhexanoyl-[ACP] + L-alanine + H(+) = (8S)-8-amino-7-oxononanoate + holo-[ACP] + CO2. It functions in the pathway cofactor biosynthesis; biotin biosynthesis. Its function is as follows. Catalyzes the decarboxylative condensation of pimeloyl-[acyl-carrier protein] and L-alanine to produce 8-amino-7-oxononanoate (AON), [acyl-carrier protein], and carbon dioxide. The polypeptide is 8-amino-7-oxononanoate synthase (Methylococcus capsulatus (strain ATCC 33009 / NCIMB 11132 / Bath)).